The following is a 556-amino-acid chain: MKTDVQIAQEAKMLPIADIAAGLGIQDDELELYGKYKAKVSLDVFDRLKDKPDGKLILVTAINPTPAGEGKTTTNVGLSMGLNKIGKKTITALREPSLGPNFGVKGGAAGGGYAQVVPMEDINLHFTGDIHAITTAHNLLAALLDNHLHQGNKLNIDSRRIVWRRVLDMNDRALRNTVIGLGSRGDGVPRQDGFDITVASEIMAILCLSNSLEDLKDRISRMVVAYNLDNQPITVNDLEATGALSLLLKDAIKPNLVQTLENTPAFIHGGPFANIAHGCNSVLATKLGLKLADYVVTEAGFGADLGAEKFFDIKCRFAGLKPDCAVIVATVRALKNHGGVPKAELNNENLEALEKGYRNLEKHIENVQKFGVPAVVAINKFPTDTEAELNFLRKHCAEMGAEVVLSDVWANGGDGGIEMAKKVVEVVESKESNFKPLYDVNASIVEKINTIAKEVYGADGVDFTKSAQTQIKKYEDLGLDKMPICMAKTQYSLSDDPSLIGRPSGFRITVKEIRLSAGAGFLVALTGDIMVMPGLPKVPAANHMDILESGEIIGLF.

65–72 (TPAGEGKT) contributes to the ATP binding site.

This sequence belongs to the formate--tetrahydrofolate ligase family.

The enzyme catalyses (6S)-5,6,7,8-tetrahydrofolate + formate + ATP = (6R)-10-formyltetrahydrofolate + ADP + phosphate. It participates in one-carbon metabolism; tetrahydrofolate interconversion. This is Formate--tetrahydrofolate ligase from Alkaliphilus oremlandii (strain OhILAs) (Clostridium oremlandii (strain OhILAs)).